The primary structure comprises 120 residues: Small ribosomal subunit protein uS13 (120 aa).

The tract at residues 93–120 (RKGLPVRGQTTKNNARTRKGKKKTVGSK) is disordered. The span at 107-120 (ARTRKGKKKTVGSK) shows a compositional bias: basic residues.

It belongs to the universal ribosomal protein uS13 family. In terms of assembly, part of the 30S ribosomal subunit. Forms a loose heterodimer with protein S19. Forms two bridges to the 50S subunit in the 70S ribosome.

Its function is as follows. Located at the top of the head of the 30S subunit, it contacts several helices of the 16S rRNA. In the 70S ribosome it contacts the 23S rRNA (bridge B1a) and protein L5 of the 50S subunit (bridge B1b), connecting the 2 subunits; these bridges are implicated in subunit movement. Contacts the tRNAs in the A and P-sites. The chain is Small ribosomal subunit protein uS13 from Helicobacter pylori (strain P12).